Consider the following 425-residue polypeptide: Histidinol dehydrogenase (425 aa).

Residues Ser231, Gln253, and His256 each coordinate substrate. Positions 253 and 256 each coordinate Zn(2+). Active-site proton acceptor residues include Glu321 and His322. His322, Asp355, Glu409, and His414 together coordinate substrate. Asp355 contacts Zn(2+). His414 contributes to the Zn(2+) binding site.

This sequence belongs to the histidinol dehydrogenase family. It depends on Zn(2+) as a cofactor.

It carries out the reaction L-histidinol + 2 NAD(+) + H2O = L-histidine + 2 NADH + 3 H(+). The protein operates within amino-acid biosynthesis; L-histidine biosynthesis; L-histidine from 5-phospho-alpha-D-ribose 1-diphosphate: step 9/9. Its function is as follows. Catalyzes the sequential NAD-dependent oxidations of L-histidinol to L-histidinaldehyde and then to L-histidine. The chain is Histidinol dehydrogenase from Carboxydothermus hydrogenoformans (strain ATCC BAA-161 / DSM 6008 / Z-2901).